A 188-amino-acid polypeptide reads, in one-letter code: ATP synthase subunit b 1 (188 aa).

A helical membrane pass occupies residues Val35–Ile55.

The protein belongs to the ATPase B chain family. As to quaternary structure, F-type ATPases have 2 components, F(1) - the catalytic core - and F(0) - the membrane proton channel. F(1) has five subunits: alpha(3), beta(3), gamma(1), delta(1), epsilon(1). F(0) has three main subunits: a(1), b(2) and c(10-14). The alpha and beta chains form an alternating ring which encloses part of the gamma chain. F(1) is attached to F(0) by a central stalk formed by the gamma and epsilon chains, while a peripheral stalk is formed by the delta and b chains.

It is found in the cell inner membrane. In terms of biological role, f(1)F(0) ATP synthase produces ATP from ADP in the presence of a proton or sodium gradient. F-type ATPases consist of two structural domains, F(1) containing the extramembraneous catalytic core and F(0) containing the membrane proton channel, linked together by a central stalk and a peripheral stalk. During catalysis, ATP synthesis in the catalytic domain of F(1) is coupled via a rotary mechanism of the central stalk subunits to proton translocation. Component of the F(0) channel, it forms part of the peripheral stalk, linking F(1) to F(0). The sequence is that of ATP synthase subunit b 1 from Bartonella tribocorum (strain CIP 105476 / IBS 506).